A 122-amino-acid polypeptide reads, in one-letter code: Large ribosomal subunit protein uL14 (122 aa).

Belongs to the universal ribosomal protein uL14 family. As to quaternary structure, part of the 50S ribosomal subunit. Forms a cluster with proteins L3 and L19. In the 70S ribosome, L14 and L19 interact and together make contacts with the 16S rRNA in bridges B5 and B8.

Binds to 23S rRNA. Forms part of two intersubunit bridges in the 70S ribosome. In Clostridium perfringens (strain ATCC 13124 / DSM 756 / JCM 1290 / NCIMB 6125 / NCTC 8237 / Type A), this protein is Large ribosomal subunit protein uL14.